Reading from the N-terminus, the 363-residue chain is MAISAIGFEGFEKRLEITFFEPSIFVDPEGKGLRALCKAQLDEILGPAECTIVDSLANESVDSYVLSESSLFIYAYKIIIKTCGTTKLLRAIPPILRLAGKLSLDVKSVRYTRGSFIFPGAQSYAHRSFSEEVAVLDGYFGKLAAGSKAFVMGDPAKPQKWHVYSASAETISFEEPVYTLEMCMTGLKKEKASVFFKSQSPNAAVMTESSGIRKILPDSKICDFDFEPCGYSMNAIEGPAISTIHITPEDGFSYASFEAVGYDLKKTDLNQLVERVLACFEPSEFSIAIHAEIAANSMEHNCYVNVNGYSREEGGIEELGFGAASVFYQKFCKASTGFGATNKPKPALKCCWKEDKFEEEKDY.

Active-site residues include glutamate 9 and glutamate 12. The active-site Schiff-base intermediate with substrate; via pyruvic acid is serine 69. Serine 69 carries the pyruvic acid (Ser); by autocatalysis modification. The active-site Proton donor; for catalytic activity is cysteine 83. Active-site proton acceptor; for processing activity residues include serine 232 and histidine 245.

The protein belongs to the eukaryotic AdoMetDC family. Requires pyruvate as cofactor. Post-translationally, is synthesized initially as an inactive proenzyme. Formation of the active enzyme involves a self-maturation process in which the active site pyruvoyl group is generated from an internal serine residue via an autocatalytic post-translational modification. Two non-identical subunits are generated from the proenzyme in this reaction, and the pyruvate is formed at the N-terminus of the alpha chain, which is derived from the carboxyl end of the proenzyme. The post-translation cleavage follows an unusual pathway, termed non-hydrolytic serinolysis, in which the side chain hydroxyl group of the serine supplies its oxygen atom to form the C-terminus of the beta chain, while the remainder of the serine residue undergoes an oxidative deamination to produce ammonia and the pyruvoyl group blocking the N-terminus of the alpha chain.

It catalyses the reaction S-adenosyl-L-methionine + H(+) = S-adenosyl 3-(methylsulfanyl)propylamine + CO2. It functions in the pathway amine and polyamine biosynthesis; S-adenosylmethioninamine biosynthesis; S-adenosylmethioninamine from S-adenosyl-L-methionine: step 1/1. This chain is S-adenosylmethionine decarboxylase proenzyme (SAMDC), found in Spinacia oleracea (Spinach).